The following is a 225-amino-acid chain: Transcriptional activator protein CUP2 (225 aa).

A DNA-binding region (copper-fist) is located at residues 1 to 40; it reads MVVINGVKYACETCIRGHRAAQCTHTDGPLQMIRRKGRPS. The tract at residues 1 to 108 is binds copper and DNA; it reads MVVINGVKYA…KSKGGSCHRR (108 aa). Zn(2+) contacts are provided by Cys11, Cys14, Cys23, and His25. A required for transcriptional activation region spans residues 109–225; the sequence is ANDEAAHVNG…QVSSHNSHSQ (117 aa).

Its subcellular location is the nucleus. Trans-acting regulatory protein that activates transcription of the CUP1 gene (metallothionein) in response to copper ions. Binds to the CUP1 UAS sequence 5'-GCTTCTTTTCCGCTGA-3'. Binds DNA only in presence of copper or silver. Copper seems to alter the conformation of the protein. This chain is Transcriptional activator protein CUP2 (CUP2), found in Saccharomyces cerevisiae (strain ATCC 204508 / S288c) (Baker's yeast).